The sequence spans 635 residues: 1-deoxy-D-xylulose-5-phosphate synthase (635 aa).

Residues H72 and 113–115 (GHA) each bind thiamine diphosphate. D144 serves as a coordination point for Mg(2+). Thiamine diphosphate-binding positions include 145-146 (GA), N174, Y286, and E369. A Mg(2+)-binding site is contributed by N174.

The protein belongs to the transketolase family. DXPS subfamily. As to quaternary structure, homodimer. Mg(2+) serves as cofactor. Thiamine diphosphate is required as a cofactor.

It carries out the reaction D-glyceraldehyde 3-phosphate + pyruvate + H(+) = 1-deoxy-D-xylulose 5-phosphate + CO2. Its pathway is metabolic intermediate biosynthesis; 1-deoxy-D-xylulose 5-phosphate biosynthesis; 1-deoxy-D-xylulose 5-phosphate from D-glyceraldehyde 3-phosphate and pyruvate: step 1/1. Catalyzes the acyloin condensation reaction between C atoms 2 and 3 of pyruvate and glyceraldehyde 3-phosphate to yield 1-deoxy-D-xylulose-5-phosphate (DXP). The polypeptide is 1-deoxy-D-xylulose-5-phosphate synthase (Acaryochloris marina (strain MBIC 11017)).